An 834-amino-acid chain; its full sequence is Translation factor GUF1 homolog, mitochondrial (834 aa).

The N-terminal 66 residues, 1-66, are a transit peptide targeting the mitochondrion; the sequence is MKLCGVRGSG…RPLLAEPRRY (66 aa). Residues 129-314 form the tr-type G domain; that stretch reads ACIRNVSVVA…QIIDKVPPPR (186 aa). Residues 138–145, 205–209, and 259–262 each bind GTP; these read AHVDHGKT, DTPGH, and TKMD. The tract at residues 475–507 is disordered; sequence ATGPPETASRTKPATAAETASSDDASGSSGSSV. Residues 488–507 are compositionally biased toward low complexity; the sequence is ATAAETASSDDASGSSGSSV.

It belongs to the TRAFAC class translation factor GTPase superfamily. Classic translation factor GTPase family. LepA subfamily.

The protein localises to the mitochondrion inner membrane. It catalyses the reaction GTP + H2O = GDP + phosphate + H(+). Functionally, promotes mitochondrial protein synthesis. May act as a fidelity factor of the translation reaction, by catalyzing a one-codon backward translocation of tRNAs on improperly translocated ribosomes. Binds to mitochondrial ribosomes in a GTP-dependent manner. The protein is Translation factor GUF1 homolog, mitochondrial of Leishmania major.